Consider the following 369-residue polypeptide: Aminomethyltransferase (369 aa).

Belongs to the GcvT family. The glycine cleavage system is composed of four proteins: P, T, L and H.

The catalysed reaction is N(6)-[(R)-S(8)-aminomethyldihydrolipoyl]-L-lysyl-[protein] + (6S)-5,6,7,8-tetrahydrofolate = N(6)-[(R)-dihydrolipoyl]-L-lysyl-[protein] + (6R)-5,10-methylene-5,6,7,8-tetrahydrofolate + NH4(+). The glycine cleavage system catalyzes the degradation of glycine. In Alkaliphilus metalliredigens (strain QYMF), this protein is Aminomethyltransferase.